Here is a 248-residue protein sequence, read N- to C-terminus: Pulmonary surfactant-associated protein A2 (248 aa).

Positions 1 to 20 (MWLCPLALTLILMAASGAAC) are cleaved as a signal peptide. The region spanning 28–100 (GSPGIPGTPG…AGERGPPGLP (73 aa)) is the Collagen-like domain. 4-hydroxyproline occurs at positions 30, 33, 36, 42, 54, 57, 63, 67, and 70. Residues 33–101 (PGTPGSHGLP…GERGPPGLPA (69 aa)) are disordered. Residues 42–51 (PGRDGRDGVK) show a composition bias toward basic and acidic residues. Residues 54 to 70 (PGPPGPMGPPGETPCPP) are compositionally biased toward pro residues. Positions 71–82 (GNNGLPGAPGVP) are enriched in low complexity. Residues 84–93 (ERGEKGEAGE) are compositionally biased toward basic and acidic residues. In terms of domain architecture, C-type lectin spans 132–248 (MTVGEKVFSS…LYSRLTICEF (117 aa)). Intrachain disulfides connect C155–C246 and C224–C238. A glycan (N-linked (GlcNAc...) asparagine) is linked at N207.

Belongs to the SFTPA family. Oligomeric complex of 6 set of homotrimers. N-acetylated.

The protein localises to the secreted. Its subcellular location is the extracellular space. The protein resides in the extracellular matrix. It is found in the surface film. Its function is as follows. In presence of calcium ions, it binds to surfactant phospholipids and contributes to lower the surface tension at the air-liquid interface in the alveoli of the mammalian lung and is essential for normal respiration. This chain is Pulmonary surfactant-associated protein A2 (SFTPA2), found in Homo sapiens (Human).